A 156-amino-acid polypeptide reads, in one-letter code: Small ribosomal subunit protein uS7 (156 aa).

Belongs to the universal ribosomal protein uS7 family. In terms of assembly, part of the 30S ribosomal subunit. Contacts proteins S9 and S11.

Its function is as follows. One of the primary rRNA binding proteins, it binds directly to 16S rRNA where it nucleates assembly of the head domain of the 30S subunit. Is located at the subunit interface close to the decoding center, probably blocks exit of the E-site tRNA. This chain is Small ribosomal subunit protein uS7, found in Pseudarthrobacter chlorophenolicus (strain ATCC 700700 / DSM 12829 / CIP 107037 / JCM 12360 / KCTC 9906 / NCIMB 13794 / A6) (Arthrobacter chlorophenolicus).